We begin with the raw amino-acid sequence, 471 residues long: Argininosuccinate lyase (471 aa).

Belongs to the lyase 1 family. Argininosuccinate lyase subfamily.

The protein resides in the cytoplasm. It carries out the reaction 2-(N(omega)-L-arginino)succinate = fumarate + L-arginine. It functions in the pathway amino-acid biosynthesis; L-arginine biosynthesis; L-arginine from L-ornithine and carbamoyl phosphate: step 3/3. This is Argininosuccinate lyase from Ralstonia pickettii (strain 12J).